The following is a 632-amino-acid chain: Gamma-aminobutyric acid receptor subunit theta (632 aa).

Residues 1–21 (MGIRGMLRAAVILLLIRTWLA) form the signal peptide. The Extracellular segment spans residues 22–268 (EGNYPSPIPK…FQVQREVNSY (247 aa)). Asn127 carries N-linked (GlcNAc...) asparagine glycosylation. An intrachain disulfide couples Cys183 to Cys197. A helical transmembrane segment spans residues 269-289 (LVQVYWPTVLTTITSWISFWM). At 290-297 (NYDSSAAR) the chain is on the cytoplasmic side. The chain crosses the membrane as a helical span at residues 298 to 315 (VTIGLTSMLILTTIDSHL). The Extracellular segment spans residues 316–326 (RDKLPNISCIK). The helical transmembrane segment at 327-347 (AIDIYILVCLFFVFLSLLEYV) threads the bilayer. Topologically, residues 348 to 611 (YINYLFYSRG…DYVPKVDKWS (264 aa)) are cytoplasmic. Disordered regions lie at residues 410 to 458 (SPES…STSE) and 491 to 523 (HGVTHDHEDSNESLSSDERHGHGPSGKPMLHHG). Over residues 413–425 (SLGSLTSTSEQAQ) the composition is skewed to polar residues. The span at 426–439 (LATSESLSPLTSLS) shows a compositional bias: low complexity. Positions 448–458 (ESLSDLPSTSE) are enriched in polar residues. Residues 491–511 (HGVTHDHEDSNESLSSDERHG) are compositionally biased toward basic and acidic residues. Residues 612–632 (RFLFPLAFGLFNIVYWVYHMY) traverse the membrane as a helical segment.

Belongs to the ligand-gated ion channel (TC 1.A.9) family. Gamma-aminobutyric acid receptor (TC 1.A.9.5) subfamily. GABRQ sub-subfamily. As to quaternary structure, heteropentamer, formed by a combination of alpha (GABRA1-6), beta (GABRB1-3), gamma (GABRG1-3), delta (GABRD), epsilon (GABRE), rho (GABRR1-3), pi (GABRP) and theta (GABRQ) chains, each subunit exhibiting distinct physiological and pharmacological properties. As to expression, expressed in brain.

The protein resides in the postsynaptic cell membrane. Its subcellular location is the cell membrane. It catalyses the reaction chloride(in) = chloride(out). Its activity is regulated as follows. Potentiated by etomidate, propofol, pregnanolone and pentobarbital. Functionally, theta subunit of the heteropentameric ligand-gated chloride channel gated by gamma-aminobutyric acid (GABA), a major inhibitory neurotransmitter in the brain. GABA-gated chloride channels, also named GABA(A) receptors (GABAAR), consist of five subunits arranged around a central pore and contain GABA active binding site(s) located at the alpha and beta subunit interfaces. When activated by GABA, GABAARs selectively allow the flow of chloride anions across the cell membrane down their electrochemical gradient. The polypeptide is Gamma-aminobutyric acid receptor subunit theta (Homo sapiens (Human)).